Here is a 428-residue protein sequence, read N- to C-terminus: Histidine--tRNA ligase (428 aa).

It belongs to the class-II aminoacyl-tRNA synthetase family. As to quaternary structure, homodimer.

The protein localises to the cytoplasm. The catalysed reaction is tRNA(His) + L-histidine + ATP = L-histidyl-tRNA(His) + AMP + diphosphate + H(+). This is Histidine--tRNA ligase from Bordetella pertussis (strain Tohama I / ATCC BAA-589 / NCTC 13251).